The following is a 220-amino-acid chain: Peptide methionine sulfoxide reductase MsrA (220 aa).

Cysteine 52 is an active-site residue.

It belongs to the MsrA Met sulfoxide reductase family.

The catalysed reaction is L-methionyl-[protein] + [thioredoxin]-disulfide + H2O = L-methionyl-(S)-S-oxide-[protein] + [thioredoxin]-dithiol. It carries out the reaction [thioredoxin]-disulfide + L-methionine + H2O = L-methionine (S)-S-oxide + [thioredoxin]-dithiol. Functionally, has an important function as a repair enzyme for proteins that have been inactivated by oxidation. Catalyzes the reversible oxidation-reduction of methionine sulfoxide in proteins to methionine. In Corynebacterium diphtheriae (strain ATCC 700971 / NCTC 13129 / Biotype gravis), this protein is Peptide methionine sulfoxide reductase MsrA.